Consider the following 428-residue polypeptide: Gamma-glutamyl phosphate reductase (428 aa).

It belongs to the gamma-glutamyl phosphate reductase family.

Its subcellular location is the cytoplasm. The catalysed reaction is L-glutamate 5-semialdehyde + phosphate + NADP(+) = L-glutamyl 5-phosphate + NADPH + H(+). It participates in amino-acid biosynthesis; L-proline biosynthesis; L-glutamate 5-semialdehyde from L-glutamate: step 2/2. Functionally, catalyzes the NADPH-dependent reduction of L-glutamate 5-phosphate into L-glutamate 5-semialdehyde and phosphate. The product spontaneously undergoes cyclization to form 1-pyrroline-5-carboxylate. This chain is Gamma-glutamyl phosphate reductase, found in Zymomonas mobilis subsp. mobilis (strain ATCC 31821 / ZM4 / CP4).